Reading from the N-terminus, the 637-residue chain is tRNA uridine 5-carboxymethylaminomethyl modification enzyme MnmG (637 aa).

Residues 15-20 (GAGHAG), Ile-127, and Ser-182 contribute to the FAD site. 276-290 (GPRYCPSIEDKIVRF) is an NAD(+) binding site. Gln-373 provides a ligand contact to FAD.

This sequence belongs to the MnmG family. Homodimer. Heterotetramer of two MnmE and two MnmG subunits. It depends on FAD as a cofactor.

The protein resides in the cytoplasm. Functionally, NAD-binding protein involved in the addition of a carboxymethylaminomethyl (cmnm) group at the wobble position (U34) of certain tRNAs, forming tRNA-cmnm(5)s(2)U34. This is tRNA uridine 5-carboxymethylaminomethyl modification enzyme MnmG from Streptococcus pneumoniae (strain Hungary19A-6).